The chain runs to 241 residues: Trypsin-10 (241 aa).

Residues 1 to 13 (MKSLIFVLLLGAV) form the signal peptide. The propeptide at 14-19 (FAEEDK) is activation peptide. Residues 20 to 239 (IVGGYECTRH…LSGWVRDTMA (220 aa)) enclose the Peptidase S1 domain. Intrachain disulfides connect C26/C155, C44/C60, C128/C228, C135/C201, C166/C180, and C191/C215. Residues H59 and D103 each act as charge relay system in the active site. S195 (charge relay system) is an active-site residue.

It belongs to the peptidase S1 family.

It localises to the secreted. It is found in the extracellular space. The catalysed reaction is Preferential cleavage: Arg-|-Xaa, Lys-|-Xaa.. The chain is Trypsin-10 from Gadus morhua (Atlantic cod).